A 344-amino-acid chain; its full sequence is Gibberellin receptor GID1C (344 aa).

An N-acetylalanine modification is found at A2. Residues 111-113 (HGG) carry the Involved in the stabilization of the negatively charged intermediate by the formation of the oxyanion hole motif. Gibberellin A4 contacts are provided by residues 113-114 (GS), Y125, and S189. Positions 114, 125, 189, and 236 each coordinate gibberellin A3. S189 is an active-site residue. D287 is an active-site residue. Residue G318 participates in gibberellin A4 binding. G318 provides a ligand contact to gibberellin A3.

The protein belongs to the 'GDXG' lipolytic enzyme family. As to quaternary structure, interacts with the DELLA proteins GAI, RGA, RGL1, RGL2 and RGL3 in a GA-dependent manner. As to expression, widely expressed.

It localises to the nucleus. Functionally, functions as a soluble gibberellin (GA) receptor. GA is an essential hormone that regulates growth and development in plants. Binds with high affinity the biologically active gibberellin GA4, but has no affinity for the biologically inactive GAs. In response to GA, interacts with specific DELLA proteins, known as repressors of GA-induced growth, and targets them for degradation via proteasome. Seems to be required for GA signaling that controls root growth, seed germination and stem elongation. Partially redundant with GID1A and GID1B. The protein is Gibberellin receptor GID1C (GID1C) of Arabidopsis thaliana (Mouse-ear cress).